Consider the following 931-residue polypeptide: Valine--tRNA ligase (931 aa).

Residues 42–52 (PNVTGSLHMGH) carry the 'HIGH' region motif. A 'KMSKS' region motif is present at residues 523-527 (KMSKS). An ATP-binding site is contributed by lysine 526. The stretch at 859 to 931 (MAGLIDKEAE…EEQLEKIKYL (73 aa)) forms a coiled coil.

The protein belongs to the class-I aminoacyl-tRNA synthetase family. ValS type 1 subfamily. As to quaternary structure, monomer.

It is found in the cytoplasm. It catalyses the reaction tRNA(Val) + L-valine + ATP = L-valyl-tRNA(Val) + AMP + diphosphate. Catalyzes the attachment of valine to tRNA(Val). As ValRS can inadvertently accommodate and process structurally similar amino acids such as threonine, to avoid such errors, it has a 'posttransfer' editing activity that hydrolyzes mischarged Thr-tRNA(Val) in a tRNA-dependent manner. The sequence is that of Valine--tRNA ligase from Alcanivorax borkumensis (strain ATCC 700651 / DSM 11573 / NCIMB 13689 / SK2).